A 264-amino-acid polypeptide reads, in one-letter code: Anamorsin homolog 2 (264 aa).

The segment at 1 to 142 (MAATAAALAV…KVSWSMGSSF (142 aa)) is N-terminal SAM-like domain. The linker stretch occupies residues 143 to 174 (PLKKATKGLPKIQIDDDSELIDEDSLLTEDDL). 4 residues coordinate [2Fe-2S] cluster: Cys185, Cys194, Cys197, and Cys199. Positions 185-199 (CEVGATRKACKNCTC) are fe-S binding site A. Positions 225, 228, 236, and 239 each coordinate [4Fe-4S] cluster. 2 short sequence motifs (cx2C motif) span residues 225–228 (CGNC) and 236–239 (CGTC). Positions 225-239 (CGNCGLGDAFRCGTC) are fe-S binding site B.

This sequence belongs to the anamorsin family. Monomer. The cofactor is [2Fe-2S] cluster. Requires [4Fe-4S] cluster as cofactor.

It is found in the cytoplasm. It localises to the mitochondrion intermembrane space. Component of the cytosolic iron-sulfur (Fe-S) protein assembly (CIA) machinery. Required for the maturation of extramitochondrial Fe-S proteins. Part of an electron transfer chain functioning in an early step of cytosolic Fe-S biogenesis, facilitating the de novo assembly of a [4Fe-4S] cluster on the cytosolic Fe-S scaffold complex. Electrons are transferred from NADPH via a FAD- and FMN-containing diflavin oxidoreductase. Together with the diflavin oxidoreductase, also required for the assembly of the diferric tyrosyl radical cofactor of ribonucleotide reductase (RNR), probably by providing electrons for reduction during radical cofactor maturation in the catalytic small subunit. The polypeptide is Anamorsin homolog 2 (Oryza sativa subsp. indica (Rice)).